The primary structure comprises 200 residues: MASKLETLKANLEAAFGGLLQSTTEAIGELTIVVKAGDYLNVATRLRDDRSLGFEQCVDLCGVDYQTYADGAYDGPRFAAVLHLLSVQNNWRLRLRVFAPDDEVPILPSVVEIWNSVNWYEREAFDLYGIVFEGHPDLRRILTDYGFIGHPFRKDFPVSGYVEMRYDPEEKRVVYQPVTIEPREITPRVIREDRYGGLKH.

Belongs to the complex I 30 kDa subunit family. NDH-1 is composed of 14 different subunits. Subunits NuoB, C, D, E, F, and G constitute the peripheral sector of the complex.

Its subcellular location is the cell inner membrane. It catalyses the reaction a quinone + NADH + 5 H(+)(in) = a quinol + NAD(+) + 4 H(+)(out). Its function is as follows. NDH-1 shuttles electrons from NADH, via FMN and iron-sulfur (Fe-S) centers, to quinones in the respiratory chain. The immediate electron acceptor for the enzyme in this species is believed to be ubiquinone. Couples the redox reaction to proton translocation (for every two electrons transferred, four hydrogen ions are translocated across the cytoplasmic membrane), and thus conserves the redox energy in a proton gradient. This chain is NADH-quinone oxidoreductase subunit C, found in Paraburkholderia xenovorans (strain LB400).